We begin with the raw amino-acid sequence, 102 residues long: GDAERGKKLFESRAGQCHSSQKGVNSTGPALYGVYGRTSGTVPGYAYSNANKNAAIVWEDESLNKFLENPKKYVPGTKMAFAGIKAKKDRLDIIAYMKTLKD.

N-acetylglycine is present on G1. Positions 1–11 (GDAERGKKLFE) are enriched in basic and acidic residues. A disordered region spans residues 1–26 (GDAERGKKLFESRAGQCHSSQKGVNS). Heme c contacts are provided by C17, H18, and M79. Over residues 17–26 (CHSSQKGVNS) the composition is skewed to polar residues. K85 carries the post-translational modification N6,N6,N6-trimethyllysine.

The protein belongs to the cytochrome c family. In terms of processing, binds 1 heme c group covalently per subunit.

It is found in the mitochondrion intermembrane space. Electron carrier protein. The oxidized form of the cytochrome c heme group can accept an electron from the heme group of the cytochrome c1 subunit of cytochrome reductase. Cytochrome c then transfers this electron to the cytochrome oxidase complex, the final protein carrier in the mitochondrial electron-transport chain. This Euglena viridis (Cercaria viridis) protein is Cytochrome c.